The chain runs to 313 residues: Olfactory receptor 1G1 (313 aa).

At 1–25 (MEGKNLTSISEFFLLGFSEQLEEQK) the chain is on the extracellular side. N5 is a glycosylation site (N-linked (GlcNAc...) asparagine). A helical membrane pass occupies residues 26-49 (ALFGSFLFMYLVMVAGNLLIILVI). Over 50–57 (ITDTQLHT) the chain is Cytoplasmic. A helical membrane pass occupies residues 58–79 (PMYFFLANLSLADACFVSTTVP). At 80–100 (KMLANIQIQSQAISYSGCLLQ) the chain is on the extracellular side. A disulfide bridge connects residues C97 and C189. A helical membrane pass occupies residues 101 to 120 (LYFFMLFVMLEAFLLAVMAY). Over 121 to 140 (DHYVAICHPLHYILIMSPGL) the chain is Cytoplasmic. A helical membrane pass occupies residues 141–158 (CVFLVSASWIMNALYSLL). Residues 159–196 (HTLLMNSLSFCANHEIPHFFCDIDPLLSLSCADPFTNE) are Extracellular-facing. The chain crosses the membrane as a helical span at residues 197-219 (LVIFITGGLTGLICVLCLIISYT). Residues 220–236 (NVFSTILKIPSAQGKRK) lie on the Cytoplasmic side of the membrane. Residues 237-259 (AFSTCSSHLSVVSLFXGTSFCVY) form a helical membrane-spanning segment. Over 260-272 (FSPPSTRXAQKDT) the chain is Extracellular. Residues 273-292 (VASVMYTVVTPMLNPFIYSL) traverse the membrane as a helical segment. The Cytoplasmic segment spans residues 293 to 313 (RNQEIKSSLRKLIWVRKIHSP).

This sequence belongs to the G-protein coupled receptor 1 family.

The protein resides in the cell membrane. Its function is as follows. Odorant receptor. The polypeptide is Olfactory receptor 1G1 (OR1G1) (Pan troglodytes (Chimpanzee)).